The following is an 892-amino-acid chain: Putative disease resistance protein At4g10780 (892 aa).

Residues 24 to 63 are a coiled coil; sequence SLGNYIHKLKDNIVALEKAIEDLTATRDDVLRRVQMEEGK. An NB-ARC domain is found at 137 to 440; sequence IVAAPAPKLE…ICEGFIDGNI (304 aa). 180–187 is an ATP binding site; the sequence is GMGGVGKT. LRR repeat units lie at residues 515 to 536, 537 to 559, 562 to 584, 586 to 608, 609 to 631, and 632 to 654; these read AVRR…PECP, ELTT…FFRH, KLVV…ISEL, ALRY…QDLK, TLIH…SKLS, and SLRT…KELH.

The protein belongs to the disease resistance NB-LRR family.

In terms of biological role, potential disease resistance protein. This chain is Putative disease resistance protein At4g10780, found in Arabidopsis thaliana (Mouse-ear cress).